A 269-amino-acid polypeptide reads, in one-letter code: 5'-nucleotidase SurE (269 aa).

4 residues coordinate a divalent metal cation: Asp-11, Asp-12, Ser-43, and Asn-101.

Belongs to the SurE nucleotidase family. Requires a divalent metal cation as cofactor.

The protein localises to the cytoplasm. The enzyme catalyses a ribonucleoside 5'-phosphate + H2O = a ribonucleoside + phosphate. Nucleotidase that shows phosphatase activity on nucleoside 5'-monophosphates. This is 5'-nucleotidase SurE from Prochlorococcus marinus (strain MIT 9313).